The chain runs to 1555 residues: Bromodomain adjacent to zinc finger domain protein 1A (1555 aa).

Residues 1 to 128 (MPLLHRKPFV…EETVEVIRNN (128 aa)) form a required for association with the CHRAC1/POLE3 complex region. The tract at residues 1–128 (MPLLHRKPFV…EETVEVIRNN (128 aa)) is required for interaction with the CHRAC1-POLE3 heterodimer. Required for interaction with the CHRAC1-POLE3 heterodimer. A required for interaction with NCOR1 region spans residues 1-133 (MPLLHRKPFV…VIRNNGTRLQ (133 aa)). One can recognise a WAC domain in the interval 22 to 128 (EEVFYCKVTN…EETVEVIRNN (107 aa)). Phosphoserine is present on residues S270 and S284. The region spanning 422–488 (PEVFGDALMV…LTAIFQAMAE (67 aa)) is the DDT domain. Residues 635–701 (IEDYVDVLRQ…EDEQRNSAAV (67 aa)) adopt a coiled-coil conformation. 2 stretches are compositionally biased toward basic and acidic residues: residues 652–664 (LKAE…REAT) and 671–696 (RKEE…DEQR). Residues 652 to 751 (LKAEQHRKER…KRSRRGKVGQ (100 aa)) form a disordered region. Residues 668–935 (IRRRKEEKLK…QEKSRICAQL (268 aa)) are interaction with SMARCA5. Positions 668–935 (IRRRKEEKLK…QEKSRICAQL (268 aa)) are required for interaction with SMARCA5 and formation of the CHRAC ISWI chromatin remodeling complex. 2 stretches are compositionally biased toward acidic residues: residues 705–714 (GEEEREDFDT) and 728–737 (PDVVTEDEDD). Residue T732 is modified to Phosphothreonine. Positions 773–798 (SADAEEALRQEQQQKEKELLDKIQSA) form a coiled coil. 2 disordered regions span residues 843 to 874 (PSSF…SSLD) and 944 to 969 (HFSD…CDIS). The segment covering 864–873 (SFLSESTSSL) has biased composition (low complexity). K954 is covalently cross-linked (Glycyl lysine isopeptide (Lys-Gly) (interchain with G-Cter in SUMO2)). Phosphoserine occurs at positions 962 and 963. A PHD-type zinc finger spans residues 1149–1199 (NARCKICRKKGDAENMVLCDGCDRGHHTYCVRPKLKAVPDGDWFCPECRPK). Residues 1203–1429 (RRLSSRQRPS…LNRRSSGRQG (227 aa)) are disordered. Residues 1214-1258 (ESDEEMEEGMEDDDDEVDDDDEEGQSEEEEYEVEQDEEDSDDDEA) show a composition bias toward acidic residues. Positions 1263–1277 (KRGRPQVRLPIKTKG) are enriched in basic residues. Position 1282 is a phosphoserine (S1282). Positions 1297 to 1313 (SRSQQSTPKNTAKSASK) are enriched in polar residues. Phosphoserine occurs at positions 1320, 1339, 1352, 1370, 1401, 1412, and 1416. Residues 1369 to 1386 (HSPSFTNFRVSTSRSSRQ) are compositionally biased toward polar residues. The 104-residue stretch at 1429–1532 (GGVHELSAFE…AFFHIQAQKL (104 aa)) folds into the Bromo domain. Position 1546 is a phosphothreonine (T1546).

Belongs to the WAL family. In terms of assembly, component of the ACF-1 ISWI chromatin remodeling complex at least composed of SMARCA1 and BAZ1A, which regulates the spacing of histone octamers on the DNA template to facilitate access to DNA. Within the ACF-1 ISWI chromatin remodeling complex interacts with SMARCA1; the interaction is direct. Component of the ACF-5 ISWI chromatin remodeling complex (also called the ACF complex) at least composed of BAZ1A and SMARCA5/SNF2H, which regulates the spacing of histone octamers on the DNA template to facilitate access to DNA. Within the ACF-5 ISWI chromatin remodeling complex interacts with SMARCA5/SNF2H; the interaction is direct. Component of the CHRAC ISWI chromatin remodeling complex at least composed of SMARCA5/SNF2H, BAZ1A/ACF1, CHRAC1 and POLE3; the complex preferentially binds DNA through the CHRAC1-POLE3 heterodimer and possesses ATP-dependent nucleosome-remodeling activity. Within the complex interacts (via N-terminus) with POLE3-CHRAC1 heterodimer; the interaction is direct and is required for the complex to preferentially bind to DNA. Within the complex interacts with SMARCA5/SNF2H; the interaction is direct and promotes the interaction with the POLE3-CHRAC1 heterodimer. Interacts with NCOR1 (via its RD1 domain); the interaction corepresses a number of NCOR1-regulated genes.

It is found in the nucleus. Regulatory subunit of the ATP-dependent ACF-1 and ACF-5 ISWI chromatin remodeling complexes, which form ordered nucleosome arrays on chromatin and slide edge- and center-positioned histone octamers away from their original location on the DNA template to facilitate access to DNA during DNA-templated processes such as DNA replication, transcription, and repair. Both complexes regulate the spacing of nucleosomes along the chromatin and have the ability to slide mononucleosomes to the center of a DNA template in an ATP-dependent manner. The ACF-1 ISWI chromatin remodeling complex has a lower ATP hydrolysis rate than the ACF-5 ISWI chromatin remodeling complex. Has a role in sensing the length of DNA which flank nucleosomes, which modulates the nucleosome spacing activity of the ACF-5 ISWI chromatin remodeling complex. Involved in DNA replication and together with SMARCA5/SNF2H is required for replication of pericentric heterochromatin in S-phase. May have a role in nuclear receptor-mediated transcription repression. The polypeptide is Bromodomain adjacent to zinc finger domain protein 1A (Baz1a) (Mus musculus (Mouse)).